The chain runs to 386 residues: Galactokinase (386 aa).

32–35 is a substrate binding site; the sequence is EHTD. ATP-binding positions include Ser-66 and 123 to 129; that span reads GASLSSS. Residues Ser-129 and Glu-161 each coordinate Mg(2+). The Proton acceptor role is filled by Asp-173. Tyr-223 contributes to the substrate binding site.

It belongs to the GHMP kinase family. GalK subfamily.

The protein resides in the cytoplasm. The catalysed reaction is alpha-D-galactose + ATP = alpha-D-galactose 1-phosphate + ADP + H(+). It participates in carbohydrate metabolism; galactose metabolism. Catalyzes the transfer of the gamma-phosphate of ATP to D-galactose to form alpha-D-galactose-1-phosphate (Gal-1-P). The polypeptide is Galactokinase (Staphylococcus saprophyticus subsp. saprophyticus (strain ATCC 15305 / DSM 20229 / NCIMB 8711 / NCTC 7292 / S-41)).